Reading from the N-terminus, the 828-residue chain is MAEAALLLLPEAAAERDAREKLALWDRRPDTTAPLTDRQTDSVLELKAAAENLPVPAELPIEDLCSLTSQSLPIELTSVVPESTEDILLKGFTSLGMEEERIETAQQFFSWFAKLQTQMDQDEGTKYRQMRDYLSGFQEQCDAILNDVNSALQHLESLQKQYLFVSNKTGTLHEACEQLLKEQSELVDLAENIQQKLSYFNELETINTKLNSPTLSVNSDGFIPMLAKLDDCITYISSHPNFKDYPIYLLKFKQCLSKALHLMKTYTVNTLQTLTSQLLKRDPSSVPNADNAFTLFYVKFRAAAPKVRTLIEQIELRSEKIPEYQQLLNDIHQCYLDQRELLLGPSIACTVAELTSQNNRDHCALVRSGCAFMVHVCQDEHQLYNEFFTKPTSKLDELLEKLCVSLYDVFRPLIIHVIHLETLSELCGILKNEVLEDHVQNNAEQLGAFAAGVKQMLEDVQERLVYRTHIYIQTDITGYKPAPGDLAYPDKLVMMEQIAQSLKDEQKKVPSEASFSDVHLEEGESNSLTKSGSTESLNPRPQTTISPADLHGMWYPTVRRTLVCLSKLYRCIDRAVFQGLSQEALSACIQSLLGASESISKNKTQIDGQLFLIKHLLILREQIAPFHTEFTIKEISLDLKKTRDAAFKILNPMTVPRFFRLNSNNALIEFLLEGTPEIREHYLDSKKDVDRHLKSACEQFIQQQTKLFVEQLEEFMTKVSALKTMASQGGPKYTLSQQPWAQPAKVNDLAATAYKTIKTKLPVTLRSMSLYLSNKDTEFILFKPVRNNIQQVFQKFHALLKEEFSPEDIQIIACPSMEQLSLLLLVSK.

An N-acetylalanine modification is found at alanine 2. The tract at residues 504-543 (DEQKKVPSEASFSDVHLEEGESNSLTKSGSTESLNPRPQT) is disordered. The segment covering 525–543 (SNSLTKSGSTESLNPRPQT) has biased composition (polar residues). Serine 663 is subject to Phosphoserine.

The protein belongs to the COG3 family. Component of the conserved oligomeric Golgi complex which is composed of eight different subunits and is required for normal Golgi morphology and localization. Interacts with TMEM115. As to expression, widely expressed with highest levels in pancreas and testis and lowest levels in lung.

It localises to the golgi apparatus. It is found in the golgi stack membrane. In terms of biological role, involved in ER-Golgi transport. Also involved in retrograde (Golgi to ER) transport. The sequence is that of Conserved oligomeric Golgi complex subunit 3 (COG3) from Homo sapiens (Human).